The sequence spans 198 residues: Heat shock 70 kDa protein (198 aa).

Gly residues predominate over residues 170 to 191 (GGGVPSGMPGGMPGAGGGGGKG). The tract at residues 170 to 198 (GGGVPSGMPGGMPGAGGGGGKGPTIEEVD) is disordered.

The protein belongs to the heat shock protein 70 family.

In Schistosoma japonicum (Blood fluke), this protein is Heat shock 70 kDa protein.